Here is a 393-residue protein sequence, read N- to C-terminus: Probable acetyl-CoA acetyltransferase (393 aa).

A propeptide (removed; alternate) is located at residue threonine 2. Residue cysteine 88 is the Acyl-thioester intermediate of the active site. Catalysis depends on proton acceptor residues histidine 349 and cysteine 379.

This sequence belongs to the thiolase-like superfamily. Thiolase family.

It carries out the reaction 2 acetyl-CoA = acetoacetyl-CoA + CoA. The polypeptide is Probable acetyl-CoA acetyltransferase (fadA4) (Mycobacterium tuberculosis (strain ATCC 25618 / H37Rv)).